The chain runs to 475 residues: Na(+)/H(+) antiporter NhaA 2 (475 aa).

The next 12 helical transmembrane spans lie at 44–64 (AQATASVFLLVATITALWWAN), 92–112 (LKHIINDGLMVIFFFFIGLEI), 130–150 (LILCALGGMICPAVIYSLFNW), 156–176 (IGWGIPMATDTAFALGALTLV), 186–206 (AFLVGLAIVDDVGAIVVIALF), 211–231 (ISVIFLSISFSLIAFLAIANY), 232–252 (AGVLRPIFYILIGIAAWWTML), 255–275 (GVHPTFAGVAIALTVPARPML), 331–351 (ALDLPVSLFVLPLFALVNAGV), 368–388 (LGIVIGLVIGKFVGISGACWL), 406–426 (VIGMSLIAGIGFTMSTFIATL), and 442–462 (ILFASLLSAILGLLYLRIIAA).

It belongs to the NhaA Na(+)/H(+) (TC 2.A.33) antiporter family.

Its subcellular location is the cell inner membrane. The enzyme catalyses Na(+)(in) + 2 H(+)(out) = Na(+)(out) + 2 H(+)(in). Functionally, na(+)/H(+) antiporter that extrudes sodium in exchange for external protons. This Psychromonas ingrahamii (strain DSM 17664 / CCUG 51855 / 37) protein is Na(+)/H(+) antiporter NhaA 2.